The following is a 98-amino-acid chain: Hainantoxin-XVII.3 (98 aa).

Positions Met1 to Ala40 are cleaved as a signal peptide. Residues Gln41 to Arg64 constitute a propeptide that is removed on maturation. Intrachain disulfides connect Cys66-Cys81, Cys73-Cys85, and Cys80-Cys95.

It belongs to the hainantoxin family. 17 subfamily. In terms of tissue distribution, expressed by the venom gland.

It localises to the secreted. In terms of biological role, inhibits with low potency Kv1.2/KCNA2 and Kv1.3/KCNA3 voltage-gated potassium channels. This Cyriopagopus hainanus (Chinese bird spider) protein is Hainantoxin-XVII.3.